The primary structure comprises 470 residues: GTPase grn1 (470 aa).

Residues 1–16 show a composition bias toward basic residues; it reads MVSLKKKSKRRTTRLR. The interval 1 to 56 is disordered; the sequence is MVSLKKKSKRRTTRLRSRIEKKAAESKRKQKRADKKNPQWKSRIPKDPGIPNSFPY. Positions 17-27 are enriched in basic and acidic residues; it reads SRIEKKAAESK. Residues 153 to 333 enclose the CP-type G domain; that stretch reads DKEFKKVVEA…LVDSPGIVFP (181 aa). GTP contacts are provided by residues 202–205, 276–283, and 326–329; these read NKID, GYPNVGKS, and DSPG. The interval 405 to 415 is RNA-binding; the sequence is ARKRGRLGRGG.

Belongs to the TRAFAC class YlqF/YawG GTPase family.

Its subcellular location is the nucleus. The protein localises to the nucleolus. Required for optimal growth. Required for normal processing of ribosomal pre-rRNA. Required for nuclear export of ribosomal protein rpl2501. This is GTPase grn1 from Schizosaccharomyces pombe (strain 972 / ATCC 24843) (Fission yeast).